The chain runs to 374 residues: SKP1-interacting partner 15 (374 aa).

The region spanning 3–48 is the F-box domain; it reads SSPVNCLPPDSLHQIFSSLPIRDIMICRSVCKFFNQLLTSQCFIEI.

Part of a SCF (ASK-cullin-F-box) protein ligase complex. Interacts with SKP1A/ASK1, SKP1B/ASK2, ASK11 and ASK13.

Its subcellular location is the nucleus. The protein operates within protein modification; protein ubiquitination. In terms of biological role, component of SCF(ASK-cullin-F-box) E3 ubiquitin ligase complexes, which may mediate the ubiquitination and subsequent proteasomal degradation of target proteins. The protein is SKP1-interacting partner 15 (SKIP15) of Arabidopsis thaliana (Mouse-ear cress).